The sequence spans 294 residues: 4-hydroxy-tetrahydrodipicolinate synthase (294 aa).

Residue Thr45 coordinates pyruvate. The active-site Proton donor/acceptor is Tyr133. The active-site Schiff-base intermediate with substrate is the Lys161. Ile203 serves as a coordination point for pyruvate.

Belongs to the DapA family. As to quaternary structure, homotetramer; dimer of dimers.

It is found in the cytoplasm. The catalysed reaction is L-aspartate 4-semialdehyde + pyruvate = (2S,4S)-4-hydroxy-2,3,4,5-tetrahydrodipicolinate + H2O + H(+). Its pathway is amino-acid biosynthesis; L-lysine biosynthesis via DAP pathway; (S)-tetrahydrodipicolinate from L-aspartate: step 3/4. Functionally, catalyzes the condensation of (S)-aspartate-beta-semialdehyde [(S)-ASA] and pyruvate to 4-hydroxy-tetrahydrodipicolinate (HTPA). The protein is 4-hydroxy-tetrahydrodipicolinate synthase of Alcanivorax borkumensis (strain ATCC 700651 / DSM 11573 / NCIMB 13689 / SK2).